Here is a 200-residue protein sequence, read N- to C-terminus: Casparian strip membrane protein 1 (200 aa).

The Cytoplasmic portion of the chain corresponds to 1 to 38 (MSTTIEIPAESSAVAKGKAPLIGASSSSYEKKGGYKKG). A helical transmembrane segment spans residues 39–59 (IAIFDFILRLGAVISALSAAA). Topologically, residues 60–88 (TMGTSDETLPFFTQFFQFEAGYDDFPTFQ) are extracellular. The chain crosses the membrane as a helical span at residues 89–109 (FFVIAMGFVGGYLVLSLPFSV). The Cytoplasmic segment spans residues 110–121 (VAIIRPHAVGIR). Residues 122 to 142 (LLLLILDTVALTLNTAAAAAA) traverse the membrane as a helical segment. The Extracellular segment spans residues 143-175 (AAIVYLAHNGNQSANWLAVCQQFGDFCQKVSGG). N-linked (GlcNAc...) asparagine glycosylation occurs at Asn-153. The chain crosses the membrane as a helical span at residues 176–196 (VVASFVSVLVFLLLVVMSAVA). Topologically, residues 197–200 (LRKH) are cytoplasmic.

This sequence belongs to the Casparian strip membrane proteins (CASP) family. In terms of assembly, homodimer and heterodimers.

The protein resides in the cell membrane. Its function is as follows. Regulates membrane-cell wall junctions and localized cell wall deposition. Required for establishment of the Casparian strip membrane domain (CSD) and the subsequent formation of Casparian strips, a cell wall modification of the root endodermis that determines an apoplastic barrier between the intraorganismal apoplasm and the extraorganismal apoplasm and prevents lateral diffusion. In Ricinus communis (Castor bean), this protein is Casparian strip membrane protein 1.